The chain runs to 64 residues: DNA gyrase inhibitor YacG (64 aa).

C9, C12, C28, and C32 together coordinate Zn(2+). The disordered stretch occupies residues 42-64 (DEENAIPGAPDMSDSDGWSEEQY). Positions 54 to 64 (SDSDGWSEEQY) are enriched in acidic residues.

The protein belongs to the DNA gyrase inhibitor YacG family. As to quaternary structure, interacts with GyrB. Requires Zn(2+) as cofactor.

Inhibits all the catalytic activities of DNA gyrase by preventing its interaction with DNA. Acts by binding directly to the C-terminal domain of GyrB, which probably disrupts DNA binding by the gyrase. The polypeptide is DNA gyrase inhibitor YacG (Vibrio vulnificus (strain YJ016)).